The chain runs to 365 residues: Flavone synthase (365 aa).

Histidine 76, histidine 218, aspartate 220, and histidine 276 together coordinate Fe cation. The 102-residue stretch at 194–295 (MEQKVLINYY…RLSIATFQNP (102 aa)) folds into the Fe2OG dioxygenase domain. The interval 345–365 (RLQDEKAKLEMKSKSADENLA) is disordered.

The protein belongs to the iron/ascorbate-dependent oxidoreductase family. The cofactor is Fe cation. L-ascorbate serves as cofactor.

It is found in the cytoplasm. The enzyme catalyses a flavanone + 2-oxoglutarate + O2 = a flavone + succinate + CO2 + H2O. It participates in secondary metabolite biosynthesis; flavonoid biosynthesis. Involved in the conversion of naringenin to apigenin. Acts via a direct 2,3-desaturation of flavanones instead of a sequential hydroxylation/dehydratation mechanism. This is Flavone synthase (FNSI) from Petroselinum crispum (Parsley).